The sequence spans 669 residues: Pre-mRNA-processing factor 39 (669 aa).

Basic and acidic residues predominate over residues 1–10 (MQNSHMDEYR). Positions 1–23 (MQNSHMDEYRNSSNGSTGNSSEV) are disordered. The span at 11–23 (NSSNGSTGNSSEV) shows a compositional bias: low complexity. Position 44 is a phosphoserine (Ser-44). HAT repeat units lie at residues 109–141 (NHLM…LEKR), 143–175 (DNIK…FLKE), 183–218 (ETNN…WENE), 220–253 (GNLR…HVQN), 333–365 (TFEE…FEIE), 367–399 (GTHE…YMEN), and 404–436 (GVRH…QQGN). Over residues 599-624 (KEQDSLKRKAENGSEEPEEKKAHTED) the composition is skewed to basic and acidic residues. The tract at residues 599-634 (KEQDSLKRKAENGSEEPEEKKAHTEDTTSSSTQMID) is disordered. The segment covering 625–634 (TTSSSTQMID) has biased composition (polar residues).

Belongs to the PRP39 family.

It localises to the nucleus. In terms of biological role, involved in pre-mRNA splicing. The sequence is that of Pre-mRNA-processing factor 39 (PRPF39) from Homo sapiens (Human).